The chain runs to 334 residues: Tetraacyldisaccharide 4'-kinase (334 aa).

An ATP-binding site is contributed by 60–67 (TVGGTGKT).

Belongs to the LpxK family.

It catalyses the reaction a lipid A disaccharide + ATP = a lipid IVA + ADP + H(+). It functions in the pathway glycolipid biosynthesis; lipid IV(A) biosynthesis; lipid IV(A) from (3R)-3-hydroxytetradecanoyl-[acyl-carrier-protein] and UDP-N-acetyl-alpha-D-glucosamine: step 6/6. Transfers the gamma-phosphate of ATP to the 4'-position of a tetraacyldisaccharide 1-phosphate intermediate (termed DS-1-P) to form tetraacyldisaccharide 1,4'-bis-phosphate (lipid IVA). The polypeptide is Tetraacyldisaccharide 4'-kinase (Stutzerimonas stutzeri (strain A1501) (Pseudomonas stutzeri)).